The primary structure comprises 419 residues: Light-dependent chlorophyll f synthase (419 aa).

The next 5 membrane-spanning stretches (helical) occupy residues 73-90 (YIGW…TAAI), 162-177 (HFII…EWEL), 186-200 (WISL…ASVS), 241-262 (LHQM…HGSL), and 323-337 (CLAA…SAAI). Residue His162 participates in a chlorophyll binding. Residue His242 coordinates a chlorophyll.

It belongs to the reaction center PufL/M/PsbA/D family. Homodimer.

It localises to the cellular thylakoid membrane. Synthesizes chlorophyll f or chlorophyllide f (Chl f, 2-formyl chlorophyll a), probably by oxidation of chlorophyll a or chlorophyllide a and reduction of plastoquinone. The reaction is probably light-dependent. Chl f absorbs far red light (FRL, 707 nm in 100% methanol), and is synthesized when cells are grown in FRL, where it provides the advantage of extending the spectral range of harvested light in terrestrial cyanobacteria. Chl f synthesis is probably light-dependent. In Synechococcus sp. (strain ATCC 29403 / PCC 7335), this protein is Light-dependent chlorophyll f synthase.